Consider the following 301-residue polypeptide: Probable aspartoacylase (301 aa).

Residues histidine 13 and glutamate 16 each contribute to the Zn(2+) site. Substrate is bound by residues arginine 54 and 61-62 (NR). Residue histidine 105 participates in Zn(2+) binding. Substrate-binding residues include glutamate 163 and tyrosine 273.

The protein belongs to the AspA/AstE family. Aspartoacylase subfamily. The cofactor is Zn(2+).

It carries out the reaction an N-acyl-L-aspartate + H2O = a carboxylate + L-aspartate. The sequence is that of Probable aspartoacylase from Prochlorococcus marinus (strain MIT 9301).